A 336-amino-acid chain; its full sequence is Ribosomal RNA large subunit methyltransferase F (336 aa).

The protein belongs to the methyltransferase superfamily. METTL16/RlmF family.

The protein localises to the cytoplasm. It carries out the reaction adenosine(1618) in 23S rRNA + S-adenosyl-L-methionine = N(6)-methyladenosine(1618) in 23S rRNA + S-adenosyl-L-homocysteine + H(+). Functionally, specifically methylates the adenine in position 1618 of 23S rRNA. The protein is Ribosomal RNA large subunit methyltransferase F of Yersinia pseudotuberculosis serotype I (strain IP32953).